The sequence spans 314 residues: Pseudouridine-5'-phosphate glycosidase (314 aa).

Glutamate 30 serves as the catalytic Proton donor. The substrate site is built by lysine 91 and valine 111. Mn(2+) is bound at residue aspartate 143. 145-147 provides a ligand contact to substrate; that stretch reads SAD. Residue lysine 164 is the Nucleophile of the active site.

It belongs to the pseudouridine-5'-phosphate glycosidase family. In terms of assembly, homotrimer. Requires Mn(2+) as cofactor.

It carries out the reaction D-ribose 5-phosphate + uracil = psi-UMP + H2O. Catalyzes the reversible cleavage of pseudouridine 5'-phosphate (PsiMP) to ribose 5-phosphate and uracil. Functions biologically in the cleavage direction, as part of a pseudouridine degradation pathway. The sequence is that of Pseudouridine-5'-phosphate glycosidase from Cupriavidus pinatubonensis (strain JMP 134 / LMG 1197) (Cupriavidus necator (strain JMP 134)).